Here is a 353-residue protein sequence, read N- to C-terminus: MPKSTVRPGAEIVGESAALKEVLEIAQIVARSNSPVLLRGESGTGKEFFAKLIHDSSSRHEKPFVKLNCAALSAGVLESELFGHEKGAFTGATSQKEGRFELAHGGTLLLDEIGEISAEFQAKLLRVLQEGELERVGGTRTLKVNVRLVCATNKDLETAVAAGEFRADLYYRINVVPITLPPLRQRDGDIPRLAQKFLQRFNRENGRSLSFAPATLDILSKCEFPGNIRELQNCTQRTATLARSDVIVPQDLACEQGRCYSPILKKAVAEQVGKGAIHGLARGETESMGQPCDVGVFAAETVMGQSGLIGRERLEQAMATAGWVQAKAARLLGRTPRQVGYSLRRHGIERKVF.

A Sigma-54 factor interaction domain is found at 12 to 240 (IVGESAALKE…LQNCTQRTAT (229 aa)). Residues 40–47 (GESGTGKE) and 103–112 (AHGGTLLLDE) contribute to the ATP site. The H-T-H motif DNA-binding region spans 325 to 344 (QAKAARLLGRTPRQVGYSLR).

Interacts with sigma-54.

In terms of biological role, required for activation of most nif operons, which are directly involved in nitrogen fixation. The polypeptide is Nif-specific regulatory protein (nifA) (Rhizobium leguminosarum bv. trifolii).